Consider the following 384-residue polypeptide: Kinesin-like protein KIF25 (384 aa).

The tract at residues Met1–Ala20 is disordered. The Kinesin motor domain maps to Gln7–Val363. Gly65–Ser72 is a binding site for ATP. 2 disordered regions span residues Asp217–Gly256 and Gln362–Asp384.

Belongs to the TRAFAC class myosin-kinesin ATPase superfamily. Kinesin family. Homotetramer.

It is found in the cytoplasm. It localises to the cytoskeleton. The protein localises to the microtubule organizing center. Its subcellular location is the centrosome. Functionally, minus-end microtubule-dependent motor protein. Acts as a negative regulator of centrosome separation required to prevent premature centrosome separation during interphase. Required to maintain a centered nucleus to ensure that the spindle is stably oriented at the onset of mitosis. May also act as a negative regulator of amino acid starvation-induced autophagy. The polypeptide is Kinesin-like protein KIF25 (Homo sapiens (Human)).